The sequence spans 147 residues: Myoglobin (147 aa).

One can recognise a Globin domain in the interval 2–141 (ADFDAVLKCW…VIADLEANYK (140 aa)). Residue His60 coordinates nitrite. Residue His60 coordinates O2. His89 lines the heme b pocket.

This sequence belongs to the globin family. In terms of assembly, monomeric.

It is found in the cytoplasm. Its subcellular location is the sarcoplasm. The catalysed reaction is Fe(III)-heme b-[protein] + nitric oxide + H2O = Fe(II)-heme b-[protein] + nitrite + 2 H(+). The enzyme catalyses H2O2 + AH2 = A + 2 H2O. Functionally, monomeric heme protein which primary function is to store oxygen and facilitate its diffusion within muscle tissues. Reversibly binds oxygen through a pentacoordinated heme iron and enables its timely and efficient release as needed during periods of heightened demand. Depending on the oxidative conditions of tissues and cells, and in addition to its ability to bind oxygen, it also has a nitrite reductase activity whereby it regulates the production of bioactive nitric oxide. Under stress conditions, like hypoxia and anoxia, it also protects cells against reactive oxygen species thanks to its pseudoperoxidase activity. This is Myoglobin (mb) from Auxis rochei (Bullet tuna).